A 285-amino-acid polypeptide reads, in one-letter code: RNA 5'-monophosphate methyltransferase (285 aa).

The interval Met1–Ala28 is disordered. S-adenosyl-L-methionine-binding positions include Arg46, Asn77, Asp111, Asp136 to Ile137, and Met165. Residues Glu53–Pro275 enclose the Bin3-type SAM domain.

Belongs to the methyltransferase superfamily. Interacts with DICER1; the interaction may be mediated by RNA.

It localises to the cytoplasm. The enzyme catalyses a 5'-end 5'-phospho-ribonucleoside-RNA + S-adenosyl-L-methionine = a 5'-end (5'-methylphospho)-ribonucleoside-RNA + S-adenosyl-L-homocysteine. It catalyses the reaction a 5'-end 5'-phospho-ribonucleoside-RNA + 2 S-adenosyl-L-methionine = a 5'-end (5'-bismethylphospho)-ribonucleoside-RNA + 2 S-adenosyl-L-homocysteine. O-methyltransferase that specifically monomethylates 5'-monophosphate of cytoplasmic histidyl tRNA (tRNA(His)), acting as a capping enzyme by protecting tRNA(His) from cleavage by DICER1. Also able, with less efficiently, to methylate the 5' monophosphate of a subset of pre-miRNAs, acting as a negative regulator of miRNA processing. The 5' monophosphate of pre-miRNAs is recognized by DICER1 and is required for pre-miRNAs processing: methylation at this position reduces the processing of pre-miRNAs by DICER1. Was also reported to mediate dimethylation of pre-miR-145; however dimethylation cannot be reproduced by another group which observes a monomethylation of pre-miR-145. The protein is RNA 5'-monophosphate methyltransferase of Rattus norvegicus (Rat).